The following is a 476-amino-acid chain: Serine/threonine-protein kinase WAG1 (476 aa).

The Protein kinase domain occupies 93–400 (FKLVRHLGTG…AQDIKRHEFF (308 aa)). ATP contacts are provided by residues 99–107 (LGTGNLGRV) and Lys-124. The active-site Proton acceptor is Asp-219.

The protein belongs to the protein kinase superfamily. Ser/Thr protein kinase family. In terms of tissue distribution, expressed in root tips and lateral root primordia.

The protein resides in the cytoplasm. It localises to the cytosol. It catalyses the reaction L-seryl-[protein] + ATP = O-phospho-L-seryl-[protein] + ADP + H(+). The enzyme catalyses L-threonyl-[protein] + ATP = O-phospho-L-threonyl-[protein] + ADP + H(+). Its function is as follows. Serine/threonine-protein kinase involved in the regulation of auxin signaling. Acts as a positive regulator of cellular auxin efflux and regulates organ development by enhancing PIN-mediated polar auxin transport. Phosphorylates conserved serine residues in the PIN auxin efflux carriers. Phosphorylation of PIN proteins is required and sufficient for apical-basal PIN polarity that enables directional intercellular auxin fluxes, which mediate differential growth, tissue patterning and organogenesis. Acts as a suppressor of root waving. The polypeptide is Serine/threonine-protein kinase WAG1 (WAG1) (Arabidopsis thaliana (Mouse-ear cress)).